A 334-amino-acid chain; its full sequence is RNA polymerase sigma factor RpoS (334 aa).

The segment at 21–50 is disordered; the sequence is PGIMLDESSADEQPSPRATPKATTSFSSKQ. Residues 61 to 94 form a sigma-70 factor domain-1 region; the sequence is DATQLYLNEIGFSPLLTPEEEVHFARLAQKGDPA. The segment at 99–169 is sigma-70 factor domain-2; it reads MIESNLRLVV…ERAIMNQTRT (71 aa). An Interaction with polymerase core subunit RpoC motif is present at residues 123 to 126; that stretch reads DLIE. A sigma-70 factor domain-3 region spans residues 179–254; sequence ELNVYLRAAR…DDRPTDPCEL (76 aa). A sigma-70 factor domain-4 region spans residues 267–320; it reads WLTELTDKQREVVIRRFGLRGHESSTLEEVGQEIGLTRERVRQIQVEALKRLRE. The H-T-H motif DNA-binding region spans 293–312; that stretch reads LEEVGQEIGLTRERVRQIQV.

Belongs to the sigma-70 factor family. RpoS subfamily. As to quaternary structure, interacts with the RNA polymerase core enzyme.

Its subcellular location is the cytoplasm. Functionally, sigma factors are initiation factors that promote the attachment of RNA polymerase to specific initiation sites and are then released. This sigma factor is the master transcriptional regulator of the stationary phase and the general stress response. The sequence is that of RNA polymerase sigma factor RpoS from Pseudomonas aeruginosa (strain ATCC 15692 / DSM 22644 / CIP 104116 / JCM 14847 / LMG 12228 / 1C / PRS 101 / PAO1).